The following is a 379-amino-acid chain: Glucose-1-phosphate adenylyltransferase (379 aa).

Residues glycine 164, 179 to 180, and serine 190 contribute to the alpha-D-glucose 1-phosphate site; that span reads EK.

Belongs to the bacterial/plant glucose-1-phosphate adenylyltransferase family. In terms of assembly, homotetramer.

The enzyme catalyses alpha-D-glucose 1-phosphate + ATP + H(+) = ADP-alpha-D-glucose + diphosphate. It participates in glycan biosynthesis; glycogen biosynthesis. Its function is as follows. Involved in the biosynthesis of ADP-glucose, a building block required for the elongation reactions to produce glycogen. Catalyzes the reaction between ATP and alpha-D-glucose 1-phosphate (G1P) to produce pyrophosphate and ADP-Glc. This Streptococcus uberis (strain ATCC BAA-854 / 0140J) protein is Glucose-1-phosphate adenylyltransferase.